The following is a 210-amino-acid chain: Probable GTP-binding protein EngB (210 aa).

The 176-residue stretch at 24 to 199 (QGCEVAFAGR…WEVLGRWLDL (176 aa)) folds into the EngB-type G domain. Residues 32–39 (GRSNAGKS), 59–63 (GRTRM), 77–80 (DLPG), 144–147 (TKSD), and 178–180 (FSS) each bind GTP. 2 residues coordinate Mg(2+): Ser39 and Thr61.

This sequence belongs to the TRAFAC class TrmE-Era-EngA-EngB-Septin-like GTPase superfamily. EngB GTPase family. The cofactor is Mg(2+).

In terms of biological role, necessary for normal cell division and for the maintenance of normal septation. The sequence is that of Probable GTP-binding protein EngB from Methylococcus capsulatus (strain ATCC 33009 / NCIMB 11132 / Bath).